The primary structure comprises 149 residues: Protegrin-1 (149 aa).

A signal peptide spans 1–29 (METQRASLCLGRWSLWLLLLALVVPSASA). Positions 30-130 (QALSYREAVL…DITCNEVQGV (101 aa)) are excised as a propeptide. Residues 61 to 80 (DQPPKADEDPGTPKPVSFTV) are disordered. 4 cysteine pairs are disulfide-bonded: C85/C96, C107/C124, C136/C145, and C138/C143. R148 bears the Arginine amide mark.

The protein belongs to the cathelicidin family.

Its subcellular location is the secreted. Functionally, microbicidal activity. Active against E.coli, Listeria monocytogenes and C.albicans, in vitro. The polypeptide is Protegrin-1 (NPG1) (Sus scrofa (Pig)).